The following is a 564-amino-acid chain: Dihydroxy-acid dehydratase (564 aa).

C50 contacts [2Fe-2S] cluster. A Mg(2+)-binding site is contributed by D82. A [2Fe-2S] cluster-binding site is contributed by C123. D124 and K125 together coordinate Mg(2+). K125 is modified (N6-carboxylysine). C195 provides a ligand contact to [2Fe-2S] cluster. E447 contributes to the Mg(2+) binding site. Catalysis depends on S473, which acts as the Proton acceptor.

Belongs to the IlvD/Edd family. As to quaternary structure, homodimer. [2Fe-2S] cluster serves as cofactor. Requires Mg(2+) as cofactor.

The enzyme catalyses (2R)-2,3-dihydroxy-3-methylbutanoate = 3-methyl-2-oxobutanoate + H2O. It catalyses the reaction (2R,3R)-2,3-dihydroxy-3-methylpentanoate = (S)-3-methyl-2-oxopentanoate + H2O. Its pathway is amino-acid biosynthesis; L-isoleucine biosynthesis; L-isoleucine from 2-oxobutanoate: step 3/4. It functions in the pathway amino-acid biosynthesis; L-valine biosynthesis; L-valine from pyruvate: step 3/4. Its function is as follows. Functions in the biosynthesis of branched-chain amino acids. Catalyzes the dehydration of (2R,3R)-2,3-dihydroxy-3-methylpentanoate (2,3-dihydroxy-3-methylvalerate) into 2-oxo-3-methylpentanoate (2-oxo-3-methylvalerate) and of (2R)-2,3-dihydroxy-3-methylbutanoate (2,3-dihydroxyisovalerate) into 2-oxo-3-methylbutanoate (2-oxoisovalerate), the penultimate precursor to L-isoleucine and L-valine, respectively. The chain is Dihydroxy-acid dehydratase from Chloroflexus aggregans (strain MD-66 / DSM 9485).